The sequence spans 210 residues: Redox-sensing transcriptional repressor Rex (210 aa).

A DNA-binding region (H-T-H motif) is located at residues 17–56 (KYHRYLNELMKNDVDRISSKELGEKIGFTASQIRQDLNCF). 91–96 (GAGNIG) provides a ligand contact to NAD(+).

The protein belongs to the transcriptional regulatory Rex family. Homodimer.

The protein resides in the cytoplasm. Its function is as follows. Modulates transcription in response to changes in cellular NADH/NAD(+) redox state. In Clostridium botulinum (strain Eklund 17B / Type B), this protein is Redox-sensing transcriptional repressor Rex.